The primary structure comprises 143 residues: Ribosome maturation factor RimP (143 aa).

The protein belongs to the RimP family.

Its subcellular location is the cytoplasm. In terms of biological role, required for maturation of 30S ribosomal subunits. The chain is Ribosome maturation factor RimP from Nitrosomonas eutropha (strain DSM 101675 / C91 / Nm57).